The following is a 513-amino-acid chain: ATP synthase subunit alpha (513 aa).

172–179 (GDRQTGKT) is an ATP binding site.

Belongs to the ATPase alpha/beta chains family. As to quaternary structure, F-type ATPases have 2 components, CF(1) - the catalytic core - and CF(0) - the membrane proton channel. CF(1) has five subunits: alpha(3), beta(3), gamma(1), delta(1), epsilon(1). CF(0) has three main subunits: a(1), b(2) and c(9-12). The alpha and beta chains form an alternating ring which encloses part of the gamma chain. CF(1) is attached to CF(0) by a central stalk formed by the gamma and epsilon chains, while a peripheral stalk is formed by the delta and b chains.

It localises to the cell inner membrane. The catalysed reaction is ATP + H2O + 4 H(+)(in) = ADP + phosphate + 5 H(+)(out). Its function is as follows. Produces ATP from ADP in the presence of a proton gradient across the membrane. The alpha chain is a regulatory subunit. This Gluconacetobacter diazotrophicus (strain ATCC 49037 / DSM 5601 / CCUG 37298 / CIP 103539 / LMG 7603 / PAl5) protein is ATP synthase subunit alpha.